The following is a 188-amino-acid chain: Gamma-glutamylcyclotransferase (188 aa).

A substrate-binding site is contributed by 19-22; sequence YFAY. The Proton acceptor role is filled by Glu98. A Phosphoserine modification is found at Ser173.

It belongs to the gamma-glutamylcyclotransferase family. In terms of assembly, homodimer.

It carries out the reaction an alpha-(gamma-L-glutamyl)-L-amino acid = 5-oxo-L-proline + an L-alpha-amino acid. Its function is as follows. Catalyzes the formation of 5-oxoproline from gamma-glutamyl dipeptides and may play a significant role in glutathione homeostasis. Induces release of cytochrome c from mitochondria with resultant induction of apoptosis. This is Gamma-glutamylcyclotransferase (Ggct) from Mus musculus (Mouse).